The sequence spans 232 residues: Platelet-activating factor acetylhydrolase IB subunit alpha1 (232 aa).

Residues 1 to 20 are disordered; sequence MSGEGENPASKPTPVQDVQG. Ser-2 carries the N-acetylserine modification. Phosphoserine is present on Ser-2. Catalysis depends on residues Ser-48, Asp-193, and His-196.

Belongs to the 'GDSL' lipolytic enzyme family. Platelet-activating factor acetylhydrolase IB beta/gamma subunits subfamily. As to quaternary structure, forms a catalytic dimer which is either homodimer (alpha1/alpha1 homodimer) or heterodimer with PAFAH1B2 (alpha1/alpha2 heterodimer). Component of the cytosolic (PAF-AH (I)) heterotetrameric enzyme, which is composed of PAFAH1B1 (beta), PAFAH1B2 (alpha2) and PAFAH1B3 (alpha1) subunits. The catalytic activity of the enzyme resides in the alpha1 (PAFAH1B3) and alpha2 (PAFAH1B2) subunits, whereas the beta subunit (PAFAH1B1) has regulatory activity. Trimer formation is not essential for the catalytic activity. Interacts with VLDLR; this interaction may modulate the Reelin pathway.

The protein resides in the cytoplasm. It catalyses the reaction a 1-O-alkyl-2-acetyl-sn-glycero-3-phosphocholine + H2O = a 1-O-alkyl-sn-glycero-3-phosphocholine + acetate + H(+). The enzyme catalyses 1-O-hexadecyl-2-acetyl-sn-glycero-3-phosphocholine + H2O = 1-O-hexadecyl-sn-glycero-3-phosphocholine + acetate + H(+). It carries out the reaction 1-O-hexadecyl-2-acetyl-sn-glycero-3-phosphate + H2O = 1-O-hexadecyl-sn-glycero-3-phosphate + acetate + H(+). Its activity is regulated as follows. Beta subunit (PAFAH1B1) inhibits the acetylhydrolase activity of the alpha1/alpha1 catalytic homodimer. Functionally, alpha1 catalytic subunit of the cytosolic type I platelet-activating factor (PAF) acetylhydrolase (PAF-AH (I)) heterotetrameric enzyme that catalyzes the hydrolyze of the acetyl group at the sn-2 position of PAF and its analogs and modulates the action of PAF. The activity and substrate specificity of PAF-AH (I) are affected by its subunit composition. Both alpha1/alpha1 homodimer (PAFAH1B3/PAFAH1B3 homodimer) and alpha1/alpha2 heterodimer(PAFAH1B3/PAFAH1B2 heterodimer) hydrolyze 1-O-alkyl-2-acetyl-sn-glycero-3-phosphoric acid (AAGPA) more efficiently than PAF, but they have little hydrolytic activity towards 1-O-alkyl-2-acetyl-sn-glycero-3-phosphorylethanolamine (AAGPE). Plays an important role during the development of brain. In Mus musculus (Mouse), this protein is Platelet-activating factor acetylhydrolase IB subunit alpha1.